The chain runs to 431 residues: Cyclic 2,3-diphosphoglycerate synthetase (431 aa).

It belongs to the cyclic 2,3-diphosphoglycerate synthetase family.

Its subcellular location is the cytoplasm. The catalysed reaction is (2R)-2,3-bisphosphoglycerate + ATP + H(+) = cyclic (2R)-2,3-bisphosphoglycerate + ADP + phosphate. Its function is as follows. Catalyzes the formation of cyclic 2,3-diphosphoglycerate (cDPG) by formation of an intramolecular phosphoanhydride bond at the expense of ATP. The sequence is that of Cyclic 2,3-diphosphoglycerate synthetase from Pyrococcus furiosus (strain ATCC 43587 / DSM 3638 / JCM 8422 / Vc1).